The chain runs to 788 residues: Pyridoxal-dependent decarboxylase domain-containing protein 1 (788 aa).

Residues 28–40 show a composition bias toward basic and acidic residues; that stretch reads EDSQRRTEEENGK. The disordered stretch occupies residues 28–51; that stretch reads EDSQRRTEEENGKKLISGDIPGPL. Thr-414 bears the Phosphothreonine mark. At Ser-652 the chain carries Phosphoserine. Residues 684–788 are disordered; sequence AGVTLPPTPS…SQVEGPESLR (105 aa). Residues Thr-687 and Thr-691 each carry the phosphothreonine modification. A phosphoserine mark is found at Ser-710, Ser-718, and Ser-722. The segment covering 725-734 has biased composition (basic and acidic residues); that stretch reads HIEDLEKVER. The span at 738–750 shows a compositional bias: polar residues; the sequence is GPEQITLEASSTE. A phosphoserine mark is found at Ser-748, Ser-757, Ser-779, and Ser-786. Positions 772–788 are enriched in basic and acidic residues; that stretch reads PHPEDDHSQVEGPESLR.

The protein belongs to the group II decarboxylase family. Pyridoxal 5'-phosphate serves as cofactor.

The chain is Pyridoxal-dependent decarboxylase domain-containing protein 1 (PDXDC1) from Homo sapiens (Human).